Reading from the N-terminus, the 605-residue chain is Elongation factor 4 (605 aa).

The region spanning N4–L181 is the tr-type G domain. GTP contacts are provided by residues D16–T21 and N128–D131.

It belongs to the TRAFAC class translation factor GTPase superfamily. Classic translation factor GTPase family. LepA subfamily.

It localises to the cell membrane. It catalyses the reaction GTP + H2O = GDP + phosphate + H(+). Required for accurate and efficient protein synthesis under certain stress conditions. May act as a fidelity factor of the translation reaction, by catalyzing a one-codon backward translocation of tRNAs on improperly translocated ribosomes. Back-translocation proceeds from a post-translocation (POST) complex to a pre-translocation (PRE) complex, thus giving elongation factor G a second chance to translocate the tRNAs correctly. Binds to ribosomes in a GTP-dependent manner. This Mycoplasmopsis synoviae (strain 53) (Mycoplasma synoviae) protein is Elongation factor 4.